The primary structure comprises 96 residues: 5-hydroxytryptamine receptor 2B (96 aa).

At Cys1–Met8 the chain is on the extracellular side. N-linked (GlcNAc...) asparagine glycosylation occurs at Asn2. The helical transmembrane segment at Leu9–Leu30 threads the bilayer. Residues Asn24 to Tyr28 carry the NPxxY motif; important for ligand-induced conformation changes and signaling motif. Residues Phe31–Leu96 lie on the Cytoplasmic side of the membrane. Residue Cys45 is the site of S-palmitoyl cysteine attachment.

It belongs to the G-protein coupled receptor 1 family. In terms of assembly, interacts (via C-terminus) with MPDZ.

Its subcellular location is the cell membrane. The protein resides in the synapse. It localises to the synaptosome. In terms of biological role, G-protein coupled receptor for 5-hydroxytryptamine (serotonin). Also functions as a receptor for various ergot alkaloid derivatives and psychoactive substances. Ligand binding causes a conformation change that triggers signaling via guanine nucleotide-binding proteins (G proteins) and modulates the activity of downstream effectors. HTR2B is coupled to G(q)/G(11) G alpha proteins and activates phospholipase C-beta, releasing diacylglycerol (DAG) and inositol 1,4,5-trisphosphate (IP3) second messengers that modulate the activity of phosphatidylinositol 3-kinase and promote the release of Ca(2+) ions from intracellular stores, respectively. Beta-arrestin family members inhibit signaling via G proteins and mediate activation of alternative signaling pathways. Plays a role in the regulation of dopamine and 5-hydroxytryptamine release, 5-hydroxytryptamine uptake and in the regulation of extracellular dopamine and 5-hydroxytryptamine levels, and thereby affects neural activity. May play a role in the perception of pain. Plays a role in the regulation of behavior, including impulsive behavior. Required for normal proliferation of embryonic cardiac myocytes and normal heart development. Protects cardiomyocytes against apoptosis. Plays a role in the adaptation of pulmonary arteries to chronic hypoxia. Plays a role in vasoconstriction. Required for normal osteoblast function and proliferation, and for maintaining normal bone density. Required for normal proliferation of the interstitial cells of Cajal in the intestine. The protein is 5-hydroxytryptamine receptor 2B (HTR2B) of Cavia porcellus (Guinea pig).